Here is a 198-residue protein sequence, read N- to C-terminus: Recombination protein RecR (198 aa).

A C4-type zinc finger spans residues 57 to 72 (CSVCGHITDKDPCYIC). A Toprim domain is found at 80–175 (SVICVVQESK…KVTRIAHGLP (96 aa)).

It belongs to the RecR family.

In terms of biological role, may play a role in DNA repair. It seems to be involved in an RecBC-independent recombinational process of DNA repair. It may act with RecF and RecO. This is Recombination protein RecR from Listeria welshimeri serovar 6b (strain ATCC 35897 / DSM 20650 / CCUG 15529 / CIP 8149 / NCTC 11857 / SLCC 5334 / V8).